Consider the following 281-residue polypeptide: Probable endonuclease 4 (281 aa).

Positions 67, 107, 144, 178, 181, 215, 228, 230, and 260 each coordinate Zn(2+).

It belongs to the AP endonuclease 2 family. Requires Zn(2+) as cofactor.

The enzyme catalyses Endonucleolytic cleavage to 5'-phosphooligonucleotide end-products.. Endonuclease IV plays a role in DNA repair. It cleaves phosphodiester bonds at apurinic or apyrimidinic (AP) sites, generating a 3'-hydroxyl group and a 5'-terminal sugar phosphate. This chain is Probable endonuclease 4, found in Methanocorpusculum labreanum (strain ATCC 43576 / DSM 4855 / Z).